We begin with the raw amino-acid sequence, 551 residues long: Glucans biosynthesis protein D (551 aa).

A signal peptide (tat-type signal) is located at residues 1–32 (MDRRRFIKGSMAMAAVCGTSGIASLFSQAAFA).

This sequence belongs to the OpgD/OpgG family. Predicted to be exported by the Tat system. The position of the signal peptide cleavage has not been experimentally proven.

Its subcellular location is the periplasm. It participates in glycan metabolism; osmoregulated periplasmic glucan (OPG) biosynthesis. In terms of biological role, probably involved in the control of the structural glucose backbone of osmoregulated periplasmic glucans (OPGs). The protein is Glucans biosynthesis protein D of Shigella dysenteriae serotype 1 (strain Sd197).